A 218-amino-acid polypeptide reads, in one-letter code: MTVPRVKICGITRIEDGLAAANAGADAIGLVFYGPSPRAVTARQAAEICASLPPFVTTVALFVDASRAEIEGVLARVPVDLLQFHGNENPQFCDSFNRPWIKAVRMKDDVDLHHYAQIYRNAAGLLIDSYVAGVPGGTGETFNWGRVPKTLPLPVVLAGGLHPGNVAAAVTQVQPWAVDVSGGVEQKNVQGGRSGGIKDASAIRVFINSVKTRGVAGV.

This sequence belongs to the TrpF family.

It catalyses the reaction N-(5-phospho-beta-D-ribosyl)anthranilate = 1-(2-carboxyphenylamino)-1-deoxy-D-ribulose 5-phosphate. It participates in amino-acid biosynthesis; L-tryptophan biosynthesis; L-tryptophan from chorismate: step 3/5. The polypeptide is N-(5'-phosphoribosyl)anthranilate isomerase (Alcanivorax borkumensis (strain ATCC 700651 / DSM 11573 / NCIMB 13689 / SK2)).